Consider the following 68-residue polypeptide: Large ribosomal subunit protein uL29 (68 aa).

This sequence belongs to the universal ribosomal protein uL29 family.

The chain is Large ribosomal subunit protein uL29 from Rhodospirillum rubrum (strain ATCC 11170 / ATH 1.1.1 / DSM 467 / LMG 4362 / NCIMB 8255 / S1).